Here is a 962-residue protein sequence, read N- to C-terminus: MRSAGREPLPRRSPRWRRASPLCETSAGWRVSQLRRDDLRRPSTMKGKERSPVKPKRSRGGEDSSSRGERSKKLGGSGGSNGSSSGKTDSGGSRRSLHLDKSSSRGGSREYETGGGSSSSRLHSYSSPSTKNSSGGGESRSSSRGGGGESRSSGAASSAPGGGDGVEYKTLKISELGSQLSDEAVEDGLFHEFKRFGDVSVKISHLSGSGSGDERVAFVNFRRPEDARAAKHARGRLVLYDRPLKIEAVYVSRRRSRSPLDKDAYAPSSSVVGTSVGSHRHAPGGGGGQRSLSPGGAALGYRDYRLQQLALGRLPPPPPPPLPRELERERDYPFYDRVRPAYSLEPRVGAGAGAAPFREVDEISPEDDQRANRTLFLGNLDITVTENDLRRAFDRFGVITEVDIKRPSRGQTSTYGFLKFENLDMSHRAKLAMSGKIIIRNPIKIGYGKATPTTRLWVGGLGPWVPLAALAREFDRFGTIRTIDYRKGDSWAYIQYESLDAAHAAWTHMRGFPLGGPDRRLRVDFADTEHRYQQQYLQPLPLTHYELVTDTFGHRAPDPLRSARDRTPPLLYRDRDRDLYTDSDWVPPPPPVRERSARAATSAVTAYEPLDSLDRRRDGWSLDRDRGDRDLPSSRDQPRKRRLPEESGGRHLDRSPESERPRKQRHCTPSPDRSPELSSNRDRYNSDNDRSSRLLLLERSSPVRDRRGSLEKSQSDKRDRKNSASAERDRKHRTAAPTEGKNPLKKEDRSDGNAPSASTSSSKQKPPSQKQDGGTAPVAASSPKLCLAWQGMLLLKNSNFPSNMHLLQGDLQVASSLLVEGSTGGKVAQLKITQRLRLDQPKLDEVTRRIKVAGPNGYAILLAVPGSSDSRSSSSSATSDTAASTQRPLRNLVSYLKQKQAAGVISLPVGGNKDKENTGVLHAFPPCEFSQQFLDSPAKALAKSEEDYLVMIIVRAKLVNSG.

3 stretches are compositionally biased toward basic and acidic residues: residues 1 to 10 (MRSAGREPLP), 34 to 52 (LRRD…ERSP), and 59 to 72 (RGGE…ERSK). The interval 1-167 (MRSAGREPLP…SAPGGGDGVE (167 aa)) is disordered. The span at 82 to 94 (GSSSGKTDSGGSR) shows a compositional bias: low complexity. Basic and acidic residues predominate over residues 97-112 (LHLDKSSSRGGSREYE). Ser-108 bears the Phosphoserine mark. Residues 118-129 (SSSRLHSYSSPS) show a composition bias toward low complexity. A compositionally biased stretch (gly residues) spans 134–149 (SGGGESRSSSRGGGGE). A compositionally biased stretch (low complexity) spans 150–159 (SRSSGAASSA). An RRM 1 domain is found at 169 to 251 (KTLKISELGS…RPLKIEAVYV (83 aa)). Ser-178, Ser-207, and Ser-209 each carry phosphoserine. Lys-245 participates in a covalent cross-link: Glycyl lysine isopeptide (Lys-Gly) (interchain with G-Cter in SUMO2). Ser-252, Ser-256, and Ser-258 each carry phosphoserine. The interval 257-297 (RSPLDKDAYAPSSSVVGTSVGSHRHAPGGGGGQRSLSPGGA) is disordered. Tyr-265 carries the phosphotyrosine modification. Residues 268 to 277 (SSSVVGTSVG) show a composition bias toward low complexity. Phosphoserine is present on residues Ser-291, Ser-293, and Ser-364. 2 RRM domains span residues 373–450 (RTLF…YGKA) and 454–528 (TRLW…FADT). Residues Lys-405, Lys-419, and Lys-444 each participate in a glycyl lysine isopeptide (Lys-Gly) (interchain with G-Cter in SUMO2) cross-link. N6-acetyllysine is present on Lys-449. 2 stretches are compositionally biased toward basic and acidic residues: residues 553–580 (GHRA…RDLY) and 612–661 (SLDR…SERP). The tract at residues 553-779 (GHRAPDPLRS…KQDGGTAPVA (227 aa)) is disordered. Thr-567 carries the phosphothreonine modification. Asymmetric dimethylarginine; alternate; by PRMT1 is present on Arg-577. Arg-577 carries the omega-N-methylarginine; alternate; by PRMT1 modification. A phosphoserine mark is found at Ser-621, Ser-655, Ser-670, Ser-674, and Ser-701. 3 stretches are compositionally biased toward basic and acidic residues: residues 673–692 (RSPE…DRSS), 701–729 (SPVR…AERD), and 742–751 (NPLKKEDRSD). Lys-745 is covalently cross-linked (Glycyl lysine isopeptide (Lys-Gly) (interchain with G-Cter in SUMO2)). A compositionally biased stretch (low complexity) spans 754 to 771 (APSASTSSSKQKPPSQKQ). Phosphoserine occurs at positions 768 and 782. The SPOC domain maps to 778 to 957 (VAASSPKLCL…YLVMIIVRAK (180 aa)). A disordered region spans residues 866–885 (GSSDSRSSSSSATSDTAAST). Residues 867-885 (SSDSRSSSSSATSDTAAST) are compositionally biased toward low complexity. The residue at position 936 (Ser-936) is a Phosphoserine.

Belongs to the RRM Spen family. In terms of assembly, component of the WMM complex, a N6-methyltransferase complex composed of a catalytic subcomplex, named MAC, and of an associated subcomplex, named MACOM. The MAC subcomplex is composed of METTL3 and METTL14. The MACOM subcomplex is composed of WTAP, ZC3H13, CBLL1/HAKAI, VIRMA, and, in some cases of RBM15 (RBM15 or RBM15B). Also a component of a MACOM-like complex, named WTAP complex, composed of WTAP, ZC3H13, CBLL1, VIRMA, RBM15, BCLAF1 and THRAP3. Interacts with RBPJ. Interacts (via SPOC domain) with SETD1B. Interacts with NXF1, the interaction is required to promote mRNA export. Interacts with SF3B1. In terms of processing, methylated at Arg-577 by PRMT1, leading to promote ubiquitination by CNOT4 and subsequent degradation by the proteasome. Post-translationally, ubiquitinated by CNOT4 following methylation at Arg-577 by PRMT1.

The protein resides in the nucleus speckle. Its subcellular location is the nucleus. The protein localises to the nucleoplasm. It localises to the nucleus envelope. It is found in the nucleus membrane. In terms of biological role, RNA-binding protein that acts as a key regulator of N6-methyladenosine (m6A) methylation of RNAs, thereby regulating different processes, such as hematopoietic cell homeostasis, alternative splicing of mRNAs and X chromosome inactivation mediated by Xist RNA. Associated component of the WMM complex, a complex that mediates N6-methyladenosine (m6A) methylation of RNAs, a modification that plays a role in the efficiency of mRNA splicing and RNA processing. Plays a key role in m6A methylation, possibly by binding target RNAs and recruiting the WMM complex. Involved in random X inactivation mediated by Xist RNA: acts by binding Xist RNA and recruiting the WMM complex, which mediates m6A methylation, leading to target YTHDC1 reader on Xist RNA and promoting transcription repression activity of Xist. Required for the development of multiple tissues, such as the maintenance of the homeostasis of long-term hematopoietic stem cells and for megakaryocyte (MK) and B-cell differentiation. Regulates megakaryocyte differentiation by regulating alternative splicing of genes important for megakaryocyte differentiation; probably regulates alternative splicing via m6A regulation. Required for placental vascular branching morphogenesis and embryonic development of the heart and spleen. Acts as a regulator of thrombopoietin response in hematopoietic stem cells by regulating alternative splicing of MPL. May also function as an mRNA export factor, stimulating export and expression of RTE-containing mRNAs which are present in many retrotransposons that require to be exported prior to splicing. High affinity binding of pre-mRNA to RBM15 may allow targeting of the mRNP to the export helicase DBP5 in a manner that is independent of splicing-mediated NXF1 deposition, resulting in export prior to splicing. May be implicated in HOX gene regulation. This chain is RNA-binding protein 15, found in Mus musculus (Mouse).